We begin with the raw amino-acid sequence, 738 residues long: Photosystem I P700 chlorophyll a apoprotein A2 (738 aa).

8 helical membrane passes run 46–69 (LFSTHFGHLAIIGLWVSGNLFHIA), 135–158 (LYQGSIFMMILSAWALFAGWLHLQ), 175–199 (LNHHLAVLFGFSSIAWTGHLVHVAI), 273–291 (IAHHHLAIGVIFVIAGHMY), 333–356 (LHFQLGLALASLGVVTSLVAQHMY), 372–398 (AALYTHHQYIAIFLMCGAFAHGAIFFI), 420–442 (AIISHLSWVSLFLGFHTLGLYVH), and 521–539 (FLVHHAIALGLHTTTLILV). 2 residues coordinate [4Fe-4S] cluster: C563 and C572. The next 2 membrane-spanning stretches (helical) occupy residues 579 to 600 (AFYLAVFWALNTVGWVTFYWHW) and 647 to 669 (LAVWAWMFLFGHLVWATGFMFLI). H658, M666, and Y674 together coordinate chlorophyll a. W675 contacts phylloquinone. A helical membrane pass occupies residues 711–731 (VVGLAHFTIGYILTYAAFLIA).

It belongs to the PsaA/PsaB family. As to quaternary structure, the PsaA/B heterodimer binds the P700 chlorophyll special pair and subsequent electron acceptors. PSI consists of a core antenna complex that captures photons, and an electron transfer chain that converts photonic excitation into a charge separation. The cyanobacterial PSI reaction center is composed of one copy each of PsaA,B,C,D,E,F,I,J,K,L,M and X, and forms trimeric complexes. PSI electron transfer chain: 5 chlorophyll a, 1 chlorophyll a', 2 phylloquinones and 3 4Fe-4S clusters. PSI core antenna: 90 chlorophyll a, 22 carotenoids, 3 phospholipids and 1 galactolipid. P700 is a chlorophyll a/chlorophyll a' dimer, A0 is one or more chlorophyll a, A1 is one or both phylloquinones and FX is a shared 4Fe-4S iron-sulfur center. is required as a cofactor.

It localises to the cellular thylakoid membrane. The catalysed reaction is reduced [plastocyanin] + hnu + oxidized [2Fe-2S]-[ferredoxin] = oxidized [plastocyanin] + reduced [2Fe-2S]-[ferredoxin]. Functionally, psaA and PsaB bind P700, the primary electron donor of photosystem I (PSI), as well as the electron acceptors A0, A1 and FX. PSI is a plastocyanin/cytochrome c6-ferredoxin oxidoreductase, converting photonic excitation into a charge separation, which transfers an electron from the donor P700 chlorophyll pair to the spectroscopically characterized acceptors A0, A1, FX, FA and FB in turn. Oxidized P700 is reduced on the lumenal side of the thylakoid membrane by plastocyanin or cytochrome c6. The chain is Photosystem I P700 chlorophyll a apoprotein A2 from Synechococcus sp. (strain WH7803).